Consider the following 66-residue polypeptide: DNA-directed RNA polymerase subunit omega (66 aa).

This sequence belongs to the RNA polymerase subunit omega family. In terms of assembly, the RNAP catalytic core consists of 2 alpha, 1 beta, 1 beta' and 1 omega subunit. When a sigma factor is associated with the core the holoenzyme is formed, which can initiate transcription.

It catalyses the reaction RNA(n) + a ribonucleoside 5'-triphosphate = RNA(n+1) + diphosphate. Functionally, promotes RNA polymerase assembly. Latches the N- and C-terminal regions of the beta' subunit thereby facilitating its interaction with the beta and alpha subunits. This is DNA-directed RNA polymerase subunit omega from Clostridium botulinum (strain Eklund 17B / Type B).